Here is a 120-residue protein sequence, read N- to C-terminus: Large ribosomal subunit protein uL18 (120 aa).

This sequence belongs to the universal ribosomal protein uL18 family. In terms of assembly, part of the 50S ribosomal subunit; part of the 5S rRNA/L5/L18/L25 subcomplex. Contacts the 5S and 23S rRNAs.

Its function is as follows. This is one of the proteins that bind and probably mediate the attachment of the 5S RNA into the large ribosomal subunit, where it forms part of the central protuberance. This is Large ribosomal subunit protein uL18 from Bradyrhizobium sp. (strain BTAi1 / ATCC BAA-1182).